Here is a 74-residue protein sequence, read N- to C-terminus: Transcription attenuation protein MtrB (74 aa).

Belongs to the MtrB family. Oligomer of 11 identical subunits arranged in doughnut-like structure.

In terms of biological role, required for transcription attenuation control in the Trp operon. This trans-acting factor seems to recognize a 10 bases nucleotide sequence in the Trp leader transcript causing transcription termination. Binds the leader RNA only in presence of L-tryptophan. The polypeptide is Transcription attenuation protein MtrB (Geobacillus sp. (strain WCH70)).